We begin with the raw amino-acid sequence, 361 residues long: Queuine tRNA-ribosyltransferase (361 aa).

Residue Asp-92 is the Proton acceptor of the active site. Residues 92-96 (DSGGF), Asp-146, Gln-189, and Gly-216 contribute to the substrate site. The tract at residues 247-253 (GVGKPVD) is RNA binding. The Nucleophile role is filled by Asp-266. The RNA binding; important for wobble base 34 recognition stretch occupies residues 271–275 (TRSGR). Residues Cys-304, Cys-306, Cys-309, and His-335 each contribute to the Zn(2+) site.

The protein belongs to the queuine tRNA-ribosyltransferase family. As to quaternary structure, homodimer. Within each dimer, one monomer is responsible for RNA recognition and catalysis, while the other monomer binds to the replacement base PreQ1. The cofactor is Zn(2+).

The catalysed reaction is 7-aminomethyl-7-carbaguanine + guanosine(34) in tRNA = 7-aminomethyl-7-carbaguanosine(34) in tRNA + guanine. It participates in tRNA modification; tRNA-queuosine biosynthesis. Catalyzes the base-exchange of a guanine (G) residue with the queuine precursor 7-aminomethyl-7-deazaguanine (PreQ1) at position 34 (anticodon wobble position) in tRNAs with GU(N) anticodons (tRNA-Asp, -Asn, -His and -Tyr). Catalysis occurs through a double-displacement mechanism. The nucleophile active site attacks the C1' of nucleotide 34 to detach the guanine base from the RNA, forming a covalent enzyme-RNA intermediate. The proton acceptor active site deprotonates the incoming PreQ1, allowing a nucleophilic attack on the C1' of the ribose to form the product. After dissociation, two additional enzymatic reactions on the tRNA convert PreQ1 to queuine (Q), resulting in the hypermodified nucleoside queuosine (7-(((4,5-cis-dihydroxy-2-cyclopenten-1-yl)amino)methyl)-7-deazaguanosine). This is Queuine tRNA-ribosyltransferase from Rickettsia africae (strain ESF-5).